Reading from the N-terminus, the 94-residue chain is Integration host factor subunit beta (94 aa).

This sequence belongs to the bacterial histone-like protein family. As to quaternary structure, heterodimer of an alpha and a beta chain.

This protein is one of the two subunits of integration host factor, a specific DNA-binding protein that functions in genetic recombination as well as in transcriptional and translational control. The polypeptide is Integration host factor subunit beta (Salmonella arizonae (strain ATCC BAA-731 / CDC346-86 / RSK2980)).